A 420-amino-acid chain; its full sequence is UDP-glucuronic acid decarboxylase 1 (420 aa).

N-acetylmethionine is present on M1. At 1–19 (MVSKALLRLVSAVNRRRMK) the chain is on the cytoplasmic side. The helical; Signal-anchor for type II membrane protein transmembrane segment at 20–40 (LLLGIALLAYVASVWGNFVNM) threads the bilayer. The Lumenal portion of the chain corresponds to 41–420 (RSIQENGELK…RIKKGRTRHS (380 aa)). The residue at position 94 (T94) is a Phosphothreonine. Positions 98, 99, 100, 119, 120, 122, 123, 124, 144, and 145 each coordinate NAD(+). 2 residues coordinate UDP-alpha-D-glucuronate: L149 and Y150. NAD(+) contacts are provided by L159 and S161. K177 contributes to the UDP-alpha-D-glucuronate binding site. Position 178 (T178) interacts with NAD(+). UDP-alpha-D-glucuronate is bound by residues N185, G188, K191, and R192. The NAD(+) site is built by A200, Y231, and K235. The active-site Proton acceptor is the Y231. UDP-alpha-D-glucuronate is bound by residues Y245, Q248, and E249. Residues T261, H267, and R272 each coordinate NAD(+). N-linked (GlcNAc...) asparagine glycosylation is present at N316.

This sequence belongs to the NAD(P)-dependent epimerase/dehydratase family. UDP-glucuronic acid decarboxylase subfamily. In terms of assembly, homodimer and homotetramer. Interacts with AKT1. NAD(+) serves as cofactor.

The protein localises to the golgi apparatus. The protein resides in the golgi stack membrane. The enzyme catalyses UDP-alpha-D-glucuronate + H(+) = UDP-alpha-D-xylose + CO2. Its pathway is nucleotide-sugar biosynthesis; UDP-alpha-D-xylose biosynthesis; UDP-alpha-D-xylose from UDP-alpha-D-glucuronate: step 1/1. Functionally, catalyzes the NAD-dependent decarboxylation of UDP-glucuronic acid to UDP-xylose. Necessary for the biosynthesis of the core tetrasaccharide in glycosaminoglycan biosynthesis. In Homo sapiens (Human), this protein is UDP-glucuronic acid decarboxylase 1.